Reading from the N-terminus, the 161-residue chain is Large ribosomal subunit protein uL30m (161 aa).

Residues 1 to 34 (MAGILRSIVQRPPGRLQTATKGVEPLVCVDWIRH) constitute a mitochondrion transit peptide.

The protein belongs to the universal ribosomal protein uL30 family. In terms of assembly, component of the mitochondrial ribosome large subunit (39S) which comprises a 16S rRNA and about 50 distinct proteins.

The protein localises to the mitochondrion. This chain is Large ribosomal subunit protein uL30m (MRPL30), found in Bos taurus (Bovine).